Consider the following 1199-residue polypeptide: DNA-directed RNA polymerase subunit beta (1199 aa).

Residues 1177 to 1199 (EQEEKKAKEAEQETAEKEETKTE) form a disordered region.

It belongs to the RNA polymerase beta chain family. As to quaternary structure, the RNAP catalytic core consists of 2 alpha, 1 beta, 1 beta' and 1 omega subunit. When a sigma factor is associated with the core the holoenzyme is formed, which can initiate transcription.

The catalysed reaction is RNA(n) + a ribonucleoside 5'-triphosphate = RNA(n+1) + diphosphate. Its function is as follows. DNA-dependent RNA polymerase catalyzes the transcription of DNA into RNA using the four ribonucleoside triphosphates as substrates. This is DNA-directed RNA polymerase subunit beta from Ligilactobacillus salivarius (strain UCC118) (Lactobacillus salivarius).